The sequence spans 73 residues: Adipokinetic prohormone type 2 (73 aa).

The signal sequence occupies residues 1–20; sequence MCRIFIVLLVVAALAIIIEG. Glutamine 21 is subject to Pyrrolidone carboxylic acid. An Asparagine amide modification is found at asparagine 30. Positions 34-73 are excised as a propeptide; that stretch reads SISSEQINDDCNPEEAIFQIYKLIVSEGERIRACQRDGKM.

Expressed in corpora cardiaca (CC), corpora allata (CA) and gnathal ganglion (GNG) (at protein level). Expression in CC and CA detected in all animals, expression in GNG detected in few animals (at protein level). Not expressed in antennal lobe (AL) (at protein level).

It localises to the secreted. In terms of biological role, this hormone, released from cells in the corpora cardiaca, causes release of diglycerides from the fat body and stimulation of muscles to use these diglycerides as an energy source during energy-demanding processes. This is Adipokinetic prohormone type 2 from Agrotis ipsilon (Black cutworm moth).